Reading from the N-terminus, the 843-residue chain is Glycogen phosphorylase, brain form (843 aa).

Alanine 2 carries the N-acetylalanine modification. A Phosphoserine; by PHK; in form phosphorylase A modification is found at serine 15. Residues aspartate 43, tyrosine 197, and arginine 310 each coordinate AMP. The residue at position 197 (tyrosine 197) is a Phosphotyrosine. Tyrosine 473 carries the phosphotyrosine modification. Lysine 569 contacts pyridoxal 5'-phosphate. The pyridoxal 5'-phosphate stretch occupies residues 677 to 678 (TG). N6-(pyridoxal phosphate)lysine is present on lysine 681.

Belongs to the glycogen phosphorylase family. In terms of assembly, homodimer. Dimers associate into a tetramer to form the enzymatically active phosphorylase A. Requires pyridoxal 5'-phosphate as cofactor. Phosphorylation of Ser-15 converts phosphorylase B (unphosphorylated) to phosphorylase A.

The catalysed reaction is [(1-&gt;4)-alpha-D-glucosyl](n) + phosphate = [(1-&gt;4)-alpha-D-glucosyl](n-1) + alpha-D-glucose 1-phosphate. With respect to regulation, activity of phosphorylase is controlled both by allosteric means (through the non-covalent binding of metabolites) and by covalent modification. Thus AMP allosterically activates, whereas ATP, ADP, and glucose-6-phosphate allosterically inhibit, phosphorylase B. In terms of biological role, glycogen phosphorylase that regulates glycogen mobilization. Phosphorylase is an important allosteric enzyme in carbohydrate metabolism. Enzymes from different sources differ in their regulatory mechanisms and in their natural substrates. However, all known phosphorylases share catalytic and structural properties. The sequence is that of Glycogen phosphorylase, brain form (PYGB) from Pongo abelii (Sumatran orangutan).